A 696-amino-acid chain; its full sequence is DNA topoisomerase 6 subunit B (696 aa).

The tract at residues 1-36 (MDDDAGDGAASGGTKRKVTAASSSAAAKGKAAGKGK) is disordered. Over residues 20-36 (AASSSAAAKGKAAGKGK) the composition is skewed to low complexity. ATP-binding positions include Asn88, Asp187, 208-209 (TK), 217-224 (GKFGLGAK), and Lys543.

This sequence belongs to the TOP6B family. Homodimer. Heterotetramer of two TOP6A and two TOP6B subunits. Interacts with SPO11-2 and TOP6A3. As to expression, highly expressed in flowers before pollination. Expressed in roots and shoots.

The protein resides in the nucleus. The enzyme catalyses ATP-dependent breakage, passage and rejoining of double-stranded DNA.. Functionally, component of the DNA topoisomerase VI involved in chromatin organization and progression of endoreduplication cycles. Relaxes both positive and negative superturns and exhibits a strong decatenase activity. The B subunit binds ATP. May be involved in cell proliferation and stress tolerance. This chain is DNA topoisomerase 6 subunit B, found in Oryza sativa subsp. indica (Rice).